The chain runs to 112 residues: Putative pterin-4-alpha-carbinolamine dehydratase (112 aa).

This sequence belongs to the pterin-4-alpha-carbinolamine dehydratase family.

The enzyme catalyses (4aS,6R)-4a-hydroxy-L-erythro-5,6,7,8-tetrahydrobiopterin = (6R)-L-erythro-6,7-dihydrobiopterin + H2O. The sequence is that of Putative pterin-4-alpha-carbinolamine dehydratase from Shewanella halifaxensis (strain HAW-EB4).